A 925-amino-acid chain; its full sequence is Colossin-D (925 aa).

An N-terminal signal peptide occupies residues 1 to 26 (MIKVFKDLKFLILITIILLNLKSINC). Asn47, Asn95, Asn142, Asn166, Asn283, Asn334, Asn344, Asn378, Asn401, Asn511, and Asn642 each carry an N-linked (GlcNAc...) asparagine glycan.

Belongs to the serine-aspartate repeat-containing protein (SDr) family.

It is found in the secreted. The protein is Colossin-D (colD) of Dictyostelium discoideum (Social amoeba).